Reading from the N-terminus, the 326-residue chain is D-alanine--D-alanine ligase (326 aa).

The region spanning 114–313 is the ATP-grasp domain; sequence KRVWLQHGLR…YAELCVSIVS (200 aa). An ATP-binding site is contributed by 140 to 195; sequence PDRLGLPLILKPPHEGSTVGITKVAGYSDMKEGYAQAAKFDDEVLAEQFIAGRELT. 3 residues coordinate Mg(2+): Asp-267, Glu-280, and Asn-282.

It belongs to the D-alanine--D-alanine ligase family. Mg(2+) is required as a cofactor. The cofactor is Mn(2+).

The protein localises to the cytoplasm. The enzyme catalyses 2 D-alanine + ATP = D-alanyl-D-alanine + ADP + phosphate + H(+). Its pathway is cell wall biogenesis; peptidoglycan biosynthesis. Functionally, cell wall formation. This Bordetella petrii (strain ATCC BAA-461 / DSM 12804 / CCUG 43448) protein is D-alanine--D-alanine ligase.